The following is a 96-amino-acid chain: uncharacterized protein (96 aa).

The N-terminal stretch at 1–15 is a signal peptide; it reads MRLFILLVALFVICA.

This is an uncharacterized protein from Caenorhabditis elegans.